Here is a 199-residue protein sequence, read N- to C-terminus: SCO2-like protein RC0042 (199 aa).

It belongs to the SCO1/2 family.

This Rickettsia conorii (strain ATCC VR-613 / Malish 7) protein is SCO2-like protein RC0042.